Reading from the N-terminus, the 377-residue chain is Bacterial actin-related protein (377 aa).

It belongs to the actin family.

Functionally, may be a dominant-negative inhibitor of eukaryotic actin polymerization. The polypeptide is Bacterial actin-related protein (barP) (Haliangium ochraceum (strain DSM 14365 / JCM 11303 / SMP-2)).